The chain runs to 378 residues: Quinolinate synthase (378 aa).

Iminosuccinate contacts are provided by histidine 59 and serine 80. Cysteine 125 contacts [4Fe-4S] cluster. Iminosuccinate is bound by residues 151-153 and serine 168; that span reads YAN. Position 212 (cysteine 212) interacts with [4Fe-4S] cluster. Iminosuccinate-binding positions include 238–240 and threonine 255; that span reads HPE. Position 309 (cysteine 309) interacts with [4Fe-4S] cluster.

It belongs to the quinolinate synthase family. Type 1 subfamily. The cofactor is [4Fe-4S] cluster.

It is found in the cytoplasm. It carries out the reaction iminosuccinate + dihydroxyacetone phosphate = quinolinate + phosphate + 2 H2O + H(+). Its pathway is cofactor biosynthesis; NAD(+) biosynthesis; quinolinate from iminoaspartate: step 1/1. Its function is as follows. Catalyzes the condensation of iminoaspartate with dihydroxyacetone phosphate to form quinolinate. The protein is Quinolinate synthase of Burkholderia cenocepacia (strain HI2424).